We begin with the raw amino-acid sequence, 435 residues long: Adenylosuccinate synthetase (435 aa).

GTP-binding positions include 12–18 (GDEGKGK) and 40–42 (GHT). The active-site Proton acceptor is the aspartate 13. Residues aspartate 13 and glycine 40 each contribute to the Mg(2+) site. IMP is bound by residues 13–16 (DEGK), 38–41 (NAGH), threonine 130, arginine 144, glutamine 224, threonine 239, and arginine 301. The active-site Proton donor is histidine 41. 297–303 (TVSNRKR) provides a ligand contact to substrate. GTP-binding positions include arginine 303, 329–331 (KLD), and 411–413 (SAG).

Belongs to the adenylosuccinate synthetase family. Homodimer. Requires Mg(2+) as cofactor.

The protein resides in the cytoplasm. The enzyme catalyses IMP + L-aspartate + GTP = N(6)-(1,2-dicarboxyethyl)-AMP + GDP + phosphate + 2 H(+). It functions in the pathway purine metabolism; AMP biosynthesis via de novo pathway; AMP from IMP: step 1/2. Its function is as follows. Plays an important role in the de novo pathway of purine nucleotide biosynthesis. Catalyzes the first committed step in the biosynthesis of AMP from IMP. This chain is Adenylosuccinate synthetase, found in Wolbachia sp. subsp. Brugia malayi (strain TRS).